A 477-amino-acid polypeptide reads, in one-letter code: Myc-associated zinc finger protein (477 aa).

Disordered stretches follow at residues 59–78 (AQSP…APAA) and 121–146 (TVDT…PAAE). Over residues 130–141 (PPAPPPPPPPVS) the composition is skewed to pro residues. 4 C2H2-type zinc fingers span residues 190–212 (YICA…EAIH), 279–301 (HACE…KLSH), 307–329 (YQCP…VRSH), and 337–360 (YNCS…RQVH). Ser-361 carries the post-translational modification Phosphoserine. The segment at 366 to 388 (FKCEKCEAAFATKDRLRAHTVRH) adopts a C2H2-type 5 zinc-finger fold. The C2H2-type 6; atypical zinc-finger motif lies at 392–413 (VPCHVCGKMLSSAYISDHMKVH).

As to quaternary structure, interacts with BPTF. In terms of assembly, forms a heterodimer with MAZ isoform 2; the interaction inhibits MAZ isoform 1-mediated transcription activation. Forms a heterodimer with MAZ isoform 1; the interaction inhibits MAZ isoform 1-mediated transcription activation. In terms of tissue distribution, present in kidney, liver and brain. In the brain, highest levels are found in motor cortex and midfrontal cortex (at protein level). As to expression, expressed in the heart, brain, placenta, lung, liver, skeletal muscle and weakly expressed in the kidney. Expressed in the joint synovium.

Its subcellular location is the nucleus. Its function is as follows. Transcriptional regulator, potentially with dual roles in transcription initiation and termination. Functionally, binds DNA and functions as a transcriptional activator. Binds to two G/A-rich sites, ME1a1 and ME1a2, within the MYC promoter having greater affinity for the former. Also binds to multiple G/C-rich sites within the promoter of the Sp1 family of transcription factors. Binds DNA and functions as a transcriptional activator. Inhibits MAZ isoform 1-mediated transcription. In terms of biological role, binds DNA and functions as a transcriptional activator. The protein is Myc-associated zinc finger protein (MAZ) of Homo sapiens (Human).